The following is a 501-amino-acid chain: DELTA-alicitoxin-Pse2a (501 aa).

An N-terminal signal peptide occupies residues 1 to 22 (MSPYFKLSSALIFLAITMEALC). The propeptide occupies 23-35 (SPIENTSTSNKDN). One can recognise an MACPF domain in the interval 23 to 359 (SPIENTSTSN…GFLHFGCSYL (337 aa)). A coiled-coil region spans residues 135 to 159 (AAVTNNIASSEEEVQGLSLNLKAYS). In terms of domain architecture, EGF-like spans 388 to 422 (VCKVGPEGCQHHEDCHYRAAFWCECGGPYDLARTC). 3 cysteine pairs are disulfide-bonded: Cys389–Cys402, Cys396–Cys410, and Cys412–Cys422.

The protein localises to the secreted. It localises to the nematocyst. In terms of biological role, causes lethal toxicity to the shrimp Palaemon paucidence, and hemolytic activity toward sheep red blood cells. The polypeptide is DELTA-alicitoxin-Pse2a (Phyllodiscus semoni (Night anemone)).